An 86-amino-acid chain; its full sequence is Alpha-toxin TbTx5 (86 aa).

Positions 1-19 (MNDFVFLVVACLLTAGTEG) are cleaved as a signal peptide. One can recognise an LCN-type CS-alpha/beta domain in the interval 21-82 (KDGYPVEGDN…EPTKTNGRCK (62 aa)). Cystine bridges form between cysteine 31-cysteine 81, cysteine 35-cysteine 57, cysteine 43-cysteine 64, and cysteine 47-cysteine 66. Proline amide is present on proline 83.

It belongs to the long (4 C-C) scorpion toxin superfamily. Sodium channel inhibitor family. Alpha subfamily. As to expression, expressed by the venom gland.

It is found in the secreted. Its function is as follows. Alpha toxins bind voltage-independently at site-3 of sodium channels (Nav) and inhibit the inactivation of the activated channels, thereby blocking neuronal transmission. In Tityus bahiensis (Brazilian scorpion), this protein is Alpha-toxin TbTx5.